The chain runs to 252 residues: F-box/SPRY domain-containing protein 1 (252 aa).

Positions 1–48 constitute an F-box domain; the sequence is MVDPLCNYNVLEAIFSYLELNDLYRCSQVCKSWYHFLNDENSDVWRWH. The B30.2/SPRY domain maps to 58–250; it reads VKSDLLASVS…VSMVYLGTPL (193 aa).

The protein belongs to the FBXO45/Fsn family. In terms of assembly, component of an E3 ubiquitin ligase complex composed of hiw and Fsn.

It is found in the synapse. It functions in the pathway protein modification; protein ubiquitination. Functionally, required in the presynaptic motoneuron to down-regulate the levels of wnd and restrain synaptic terminal growth at the neuromuscular junction (NMJ). This is F-box/SPRY domain-containing protein 1 from Drosophila virilis (Fruit fly).